Consider the following 349-residue polypeptide: DNA polymerase IV (349 aa).

The UmuC domain maps to 7–188 (IIHIDMDYFF…LPVKKLFGVG (182 aa)). Mg(2+)-binding residues include Asp-11 and Asp-106. Residue Glu-107 is part of the active site.

It belongs to the DNA polymerase type-Y family. As to quaternary structure, monomer. Mg(2+) serves as cofactor.

It localises to the cytoplasm. It catalyses the reaction DNA(n) + a 2'-deoxyribonucleoside 5'-triphosphate = DNA(n+1) + diphosphate. Poorly processive, error-prone DNA polymerase involved in untargeted mutagenesis. Copies undamaged DNA at stalled replication forks, which arise in vivo from mismatched or misaligned primer ends. These misaligned primers can be extended by PolIV. Exhibits no 3'-5' exonuclease (proofreading) activity. May be involved in translesional synthesis, in conjunction with the beta clamp from PolIII. This Francisella tularensis subsp. holarctica (strain OSU18) protein is DNA polymerase IV.